The chain runs to 102 residues: Large ribosomal subunit protein uL23c (102 aa).

Belongs to the universal ribosomal protein uL23 family. In terms of assembly, part of the 50S ribosomal subunit.

It localises to the plastid. The protein resides in the chloroplast. In terms of biological role, binds to 23S rRNA. The chain is Large ribosomal subunit protein uL23c (rpl23) from Trieres chinensis (Marine centric diatom).